Here is a 413-residue protein sequence, read N- to C-terminus: Multidrug resistance protein MdtA (413 aa).

A signal peptide spans 1 to 20 (MKGSNTFRWAIAIGVVVAAA). Disordered stretches follow at residues 31-57 (SPTAAPGVAAQAPHTAAAGRRGMRDGP) and 392-413 (PQTTMADEKSPSRHEGQKGARA). Residues 397 to 413 (ADEKSPSRHEGQKGARA) are compositionally biased toward basic and acidic residues.

Belongs to the membrane fusion protein (MFP) (TC 8.A.1) family. In terms of assembly, part of a tripartite efflux system composed of MdtA, MdtB and MdtC.

The protein localises to the cell inner membrane. This chain is Multidrug resistance protein MdtA, found in Salmonella heidelberg (strain SL476).